An 883-amino-acid polypeptide reads, in one-letter code: Valine--tRNA ligase (883 aa).

The 'HIGH' region signature appears at 46-56 (PNVTGKLHLGH). The 'KMSKS' region signature appears at 520–524 (KMSKS). Lys-523 provides a ligand contact to ATP. Positions 809–844 (LADLLNVEEELARLEKELAKWQKELDMVGKKLSNER) form a coiled coil.

Belongs to the class-I aminoacyl-tRNA synthetase family. ValS type 1 subfamily. As to quaternary structure, monomer.

Its subcellular location is the cytoplasm. It carries out the reaction tRNA(Val) + L-valine + ATP = L-valyl-tRNA(Val) + AMP + diphosphate. Its function is as follows. Catalyzes the attachment of valine to tRNA(Val). As ValRS can inadvertently accommodate and process structurally similar amino acids such as threonine, to avoid such errors, it has a 'posttransfer' editing activity that hydrolyzes mischarged Thr-tRNA(Val) in a tRNA-dependent manner. The chain is Valine--tRNA ligase from Streptococcus agalactiae serotype V (strain ATCC BAA-611 / 2603 V/R).